A 247-amino-acid chain; its full sequence is Enolase-phosphatase E1 (247 aa).

This sequence belongs to the HAD-like hydrolase superfamily. MasA/MtnC family. In terms of assembly, monomer. Mg(2+) serves as cofactor.

The catalysed reaction is 5-methylsulfanyl-2,3-dioxopentyl phosphate + H2O = 1,2-dihydroxy-5-(methylsulfanyl)pent-1-en-3-one + phosphate. It participates in amino-acid biosynthesis; L-methionine biosynthesis via salvage pathway; L-methionine from S-methyl-5-thio-alpha-D-ribose 1-phosphate: step 3/6. The protein operates within amino-acid biosynthesis; L-methionine biosynthesis via salvage pathway; L-methionine from S-methyl-5-thio-alpha-D-ribose 1-phosphate: step 4/6. Bifunctional enzyme that catalyzes the enolization of 2,3-diketo-5-methylthiopentyl-1-phosphate (DK-MTP-1-P) into the intermediate 2-hydroxy-3-keto-5-methylthiopentenyl-1-phosphate (HK-MTPenyl-1-P), which is then dephosphorylated to form the acireductone 1,2-dihydroxy-3-keto-5-methylthiopentene (DHK-MTPene). This is Enolase-phosphatase E1 from Leptospira biflexa serovar Patoc (strain Patoc 1 / Ames).